The chain runs to 306 residues: Agmatinase (306 aa).

6 residues coordinate Mn(2+): His-126, Asp-149, His-151, Asp-153, Asp-230, and Asp-232.

Belongs to the arginase family. Agmatinase subfamily. The cofactor is Mn(2+).

The catalysed reaction is agmatine + H2O = urea + putrescine. Its pathway is amine and polyamine biosynthesis; putrescine biosynthesis via agmatine pathway; putrescine from agmatine: step 1/1. Functionally, catalyzes the formation of putrescine from agmatine. The chain is Agmatinase from Shigella sonnei (strain Ss046).